The following is a 132-amino-acid chain: Large-conductance mechanosensitive channel (132 aa).

2 consecutive transmembrane segments (helical) span residues 11 to 31 (FISR…GAFG) and 75 to 95 (GSFL…FLLV).

The protein belongs to the MscL family. As to quaternary structure, homopentamer.

It localises to the cell inner membrane. Functionally, channel that opens in response to stretch forces in the membrane lipid bilayer. May participate in the regulation of osmotic pressure changes within the cell. In Synechococcus sp. (strain JA-2-3B'a(2-13)) (Cyanobacteria bacterium Yellowstone B-Prime), this protein is Large-conductance mechanosensitive channel.